The following is a 203-amino-acid chain: dITP/XTP pyrophosphatase (203 aa).

Thr8 to Lys13 contributes to the substrate binding site. Positions 41 and 70 each coordinate Mg(2+). Asp70 acts as the Proton acceptor in catalysis. Substrate is bound by residues Ser71, Phe153–Asp156, Lys176, and His181–Arg182.

It belongs to the HAM1 NTPase family. As to quaternary structure, homodimer. It depends on Mg(2+) as a cofactor.

The enzyme catalyses XTP + H2O = XMP + diphosphate + H(+). It catalyses the reaction dITP + H2O = dIMP + diphosphate + H(+). The catalysed reaction is ITP + H2O = IMP + diphosphate + H(+). Its function is as follows. Pyrophosphatase that catalyzes the hydrolysis of nucleoside triphosphates to their monophosphate derivatives, with a high preference for the non-canonical purine nucleotides XTP (xanthosine triphosphate), dITP (deoxyinosine triphosphate) and ITP. Seems to function as a house-cleaning enzyme that removes non-canonical purine nucleotides from the nucleotide pool, thus preventing their incorporation into DNA/RNA and avoiding chromosomal lesions. The protein is dITP/XTP pyrophosphatase of Listeria monocytogenes serovar 1/2a (strain ATCC BAA-679 / EGD-e).